A 371-amino-acid chain; its full sequence is MSVSIVREQSITISDGIRLDSGRILAPITIAYETYGTLNTDASNAILVEHAWTGSAHLAGKQSENDTKPGWWDAIVGPGRLLDTDRYFVICSNVIGSCFGSTGPASINPKTGKRYNLTFPVITIRDMVRAQKLLIEMLGIRRLLSVMGGSMGGMQTLEWITQYPDAIASAVLLATTPRPSPLAISMNAIARWSIFNDPTWRKGEYKNNPKDGLALARAIGHITFLSDESMQAKFGRKFSARDGQFDFFGQFEVERYLDYNGYSFVSRFDANSFLYLAKALDLYDVSWGYESMAEAFARVSAPLQFFAFSSDWLYPPGQTEEMVSCLRKLGKEVEYHLISSSYGHDAFLLEHEAFSPLVKRFLDAAYAKGGQ.

An AB hydrolase-1 domain is found at 44-350; sequence NAILVEHAWT…SYGHDAFLLE (307 aa). Ser150 serves as the catalytic Nucleophile. Position 217 (Arg217) interacts with substrate. Residues Asp311 and His344 contribute to the active site. A substrate-binding site is contributed by Asp345.

It belongs to the AB hydrolase superfamily. MetX family. As to quaternary structure, homodimer.

It localises to the cytoplasm. It carries out the reaction L-homoserine + acetyl-CoA = O-acetyl-L-homoserine + CoA. Its pathway is amino-acid biosynthesis; L-methionine biosynthesis via de novo pathway; O-acetyl-L-homoserine from L-homoserine: step 1/1. In terms of biological role, transfers an acetyl group from acetyl-CoA to L-homoserine, forming acetyl-L-homoserine. This Pelobacter propionicus (strain DSM 2379 / NBRC 103807 / OttBd1) protein is Homoserine O-acetyltransferase.